Reading from the N-terminus, the 368-residue chain is Quinolinate synthase (368 aa).

2 residues coordinate iminosuccinate: His46 and Ser63. Residue Cys110 participates in [4Fe-4S] cluster binding. Residues Tyr141–Asn143 and Ser162 each bind iminosuccinate. Position 230 (Cys230) interacts with [4Fe-4S] cluster. Iminosuccinate is bound by residues His256–Glu258 and Thr273. Cys320 contributes to the [4Fe-4S] cluster binding site.

It belongs to the quinolinate synthase family. Type 3 subfamily. It depends on [4Fe-4S] cluster as a cofactor.

It is found in the cytoplasm. It catalyses the reaction iminosuccinate + dihydroxyacetone phosphate = quinolinate + phosphate + 2 H2O + H(+). Its pathway is cofactor biosynthesis; NAD(+) biosynthesis; quinolinate from iminoaspartate: step 1/1. Functionally, catalyzes the condensation of iminoaspartate with dihydroxyacetone phosphate to form quinolinate. The polypeptide is Quinolinate synthase (Bacillus cytotoxicus (strain DSM 22905 / CIP 110041 / 391-98 / NVH 391-98)).